A 328-amino-acid polypeptide reads, in one-letter code: Malate dehydrogenase (328 aa).

11 to 17 serves as a coordination point for NAD(+); sequence GAAGQIG. 2 residues coordinate substrate: arginine 94 and arginine 100. Residues asparagine 107, glutamine 114, and 131 to 133 each bind NAD(+); that span reads VGN. Substrate contacts are provided by asparagine 133 and arginine 164. Histidine 189 acts as the Proton acceptor in catalysis.

The protein belongs to the LDH/MDH superfamily. MDH type 2 family.

The enzyme catalyses (S)-malate + NAD(+) = oxaloacetate + NADH + H(+). Catalyzes the reversible oxidation of malate to oxaloacetate. The sequence is that of Malate dehydrogenase from Xanthomonas axonopodis pv. citri (strain 306).